Here is a 375-residue protein sequence, read N- to C-terminus: Lipid-A-disaccharide synthase (375 aa).

The protein belongs to the LpxB family.

The enzyme catalyses a lipid X + a UDP-2-N,3-O-bis[(3R)-3-hydroxyacyl]-alpha-D-glucosamine = a lipid A disaccharide + UDP + H(+). It functions in the pathway bacterial outer membrane biogenesis; LPS lipid A biosynthesis. In terms of biological role, condensation of UDP-2,3-diacylglucosamine and 2,3-diacylglucosamine-1-phosphate to form lipid A disaccharide, a precursor of lipid A, a phosphorylated glycolipid that anchors the lipopolysaccharide to the outer membrane of the cell. The sequence is that of Lipid-A-disaccharide synthase from Pseudomonas putida (strain GB-1).